Here is a 75-residue protein sequence, read N- to C-terminus: Translational regulator CsrA (75 aa).

This sequence belongs to the CsrA/RsmA family. As to quaternary structure, homodimer; the beta-strands of each monomer intercalate to form a hydrophobic core, while the alpha-helices form wings that extend away from the core.

The protein resides in the cytoplasm. A translational regulator that binds mRNA to regulate translation initiation and/or mRNA stability. Usually binds in the 5'-UTR at or near the Shine-Dalgarno sequence preventing ribosome-binding, thus repressing translation. Its main target seems to be the major flagellin gene, while its function is anatagonized by FliW. This Exiguobacterium sibiricum (strain DSM 17290 / CCUG 55495 / CIP 109462 / JCM 13490 / 255-15) protein is Translational regulator CsrA.